A 457-amino-acid polypeptide reads, in one-letter code: Serine--tRNA ligase (457 aa).

252 to 254 (TAE) is a binding site for L-serine. Residues 283-285 (RKE) and Val-299 each bind ATP. Glu-306 contributes to the L-serine binding site. 370-373 (EMVS) contacts ATP. An L-serine-binding site is contributed by Thr-406.

This sequence belongs to the class-II aminoacyl-tRNA synthetase family. Type-1 seryl-tRNA synthetase subfamily. In terms of assembly, homodimer. The tRNA molecule binds across the dimer.

The protein resides in the cytoplasm. It catalyses the reaction tRNA(Ser) + L-serine + ATP = L-seryl-tRNA(Ser) + AMP + diphosphate + H(+). The catalysed reaction is tRNA(Sec) + L-serine + ATP = L-seryl-tRNA(Sec) + AMP + diphosphate + H(+). Its pathway is aminoacyl-tRNA biosynthesis; selenocysteinyl-tRNA(Sec) biosynthesis; L-seryl-tRNA(Sec) from L-serine and tRNA(Sec): step 1/1. Functionally, catalyzes the attachment of serine to tRNA(Ser). Is also able to aminoacylate tRNA(Sec) with serine, to form the misacylated tRNA L-seryl-tRNA(Sec), which will be further converted into selenocysteinyl-tRNA(Sec). The chain is Serine--tRNA ligase from Saccharolobus islandicus (strain Y.G.57.14 / Yellowstone #1) (Sulfolobus islandicus).